Consider the following 74-residue polypeptide: Invertase 3 (74 aa).

Residues 1–19 (MLLQAFIFLLAGFAAKISA) form the signal peptide. N-linked (GlcNAc...) asparagine glycosylation occurs at Asn-23. Substrate is bound by residues 39–42 (WMND) and Gln-60. Asp-42 is an active-site residue. An N-linked (GlcNAc...) asparagine glycan is attached at Asn-64.

The protein belongs to the glycosyl hydrolase 32 family.

It catalyses the reaction Hydrolysis of terminal non-reducing beta-D-fructofuranoside residues in beta-D-fructofuranosides.. The polypeptide is Invertase 3 (SUC3) (Saccharomyces cerevisiae (Baker's yeast)).